The chain runs to 495 residues: Lysine--tRNA ligase (495 aa).

Residues Glu406 and Glu413 each contribute to the Mg(2+) site.

It belongs to the class-II aminoacyl-tRNA synthetase family. As to quaternary structure, homodimer. The cofactor is Mg(2+).

Its subcellular location is the cytoplasm. The enzyme catalyses tRNA(Lys) + L-lysine + ATP = L-lysyl-tRNA(Lys) + AMP + diphosphate. The chain is Lysine--tRNA ligase from Staphylococcus aureus (strain COL).